A 242-amino-acid polypeptide reads, in one-letter code: Caspase-14 (242 aa).

A propeptide spanning residues Met1–Arg5 is cleaved from the precursor. Catalysis depends on residues His89 and Cys132. Residues Glu147 to Ile152 constitute a propeptide that is removed on maturation.

Belongs to the peptidase C14A family. In terms of assembly, heterodimer of a large and a small subunit, both processed from the precursor; the mature active form is a p17/p10 dimer and the intermediate form a p20/p8 dimer. In terms of processing, maturation by proteolytic processing appears to be a two-step process. The precursor is processed by KLK7 to yield the p20/p8 intermediate form which acts on the precursor to yield the p17/p10 mature form. Initially, cleavage between Ile-152 and Lys-153 has been proposed to yield the large and small subunits of the active enzyme. As to expression, expressed in keratinocytes of adult skin suprabasal layers (from spinous layers to the stratum granulosum and stratum corneum) (at protein level). Expressed in keratinocytes of hair shaft and sebaceous glands (at protein level). In psoriatic skin only expressed at very low levels. The p17/10 mature form is expressed in epidermis stratum corneum, the p20/p8 intermediate form in epidermis upper granular cells of the stratum granulosum.

The protein localises to the cytoplasm. It is found in the nucleus. Inhibited by caspase-1 inhibitor YVAD-FMK and the pan-caspase inhibitor VAD-FMK. In terms of biological role, non-apoptotic caspase involved in epidermal differentiation. Is the predominant caspase in epidermal stratum corneum. Seems to play a role in keratinocyte differentiation and is required for cornification. Regulates maturation of the epidermis by proteolytically processing filaggrin. In vitro has a preference for the substrate [WY]-X-X-D motif and is active on the synthetic caspase substrate WEHD-ACF. Involved in processing of prosaposin in the epidermis. May be involved in retinal pigment epithelium cell barrier function. Involved in DNA degradation in differentiated keratinocytes probably by cleaving DFFA/ICAD leading to liberation of DFFB/CAD. The protein is Caspase-14 (CASP14) of Homo sapiens (Human).